A 461-amino-acid chain; its full sequence is Kynureninase (461 aa).

Residues Leu-114, Thr-115, 142–145 (FPSD), Asp-228, His-231, and Tyr-253 each bind pyridoxal 5'-phosphate. Lys-254 is subject to N6-(pyridoxal phosphate)lysine. Positions 288 and 316 each coordinate pyridoxal 5'-phosphate.

This sequence belongs to the kynureninase family. In terms of assembly, homodimer. Pyridoxal 5'-phosphate serves as cofactor.

Its subcellular location is the cytoplasm. It catalyses the reaction L-kynurenine + H2O = anthranilate + L-alanine + H(+). The catalysed reaction is 3-hydroxy-L-kynurenine + H2O = 3-hydroxyanthranilate + L-alanine + H(+). It participates in amino-acid degradation; L-kynurenine degradation; L-alanine and anthranilate from L-kynurenine: step 1/1. The protein operates within cofactor biosynthesis; NAD(+) biosynthesis; quinolinate from L-kynurenine: step 2/3. Catalyzes the cleavage of L-kynurenine (L-Kyn) and L-3-hydroxykynurenine (L-3OHKyn) into anthranilic acid (AA) and 3-hydroxyanthranilic acid (3-OHAA), respectively. This is Kynureninase from Candida albicans (strain SC5314 / ATCC MYA-2876) (Yeast).